Here is a 352-residue protein sequence, read N- to C-terminus: Small ribosomal subunit biogenesis GTPase RsgA 1 (352 aa).

The tract at residues 1-24 (MAKKKKLTQGQVRRVRDNQQKRLK) is disordered. In terms of domain architecture, CP-type G spans 104–272 (TSVLTRPDYY…LIDSPGVREF (169 aa)). Residues 160-163 (NKID) and 214-222 (GQSGVGKSS) contribute to the GTP site. 4 residues coordinate Zn(2+): Cys296, Cys301, His303, and Cys309.

The protein belongs to the TRAFAC class YlqF/YawG GTPase family. RsgA subfamily. In terms of assembly, monomer. Associates with 30S ribosomal subunit, binds 16S rRNA. It depends on Zn(2+) as a cofactor.

It is found in the cytoplasm. One of several proteins that assist in the late maturation steps of the functional core of the 30S ribosomal subunit. Helps release RbfA from mature subunits. May play a role in the assembly of ribosomal proteins into the subunit. Circularly permuted GTPase that catalyzes slow GTP hydrolysis, GTPase activity is stimulated by the 30S ribosomal subunit. This Vibrio vulnificus (strain CMCP6) protein is Small ribosomal subunit biogenesis GTPase RsgA 1.